We begin with the raw amino-acid sequence, 410 residues long: Tegument protein VP16 homolog (410 aa).

The segment at 388–410 (PPSPSEILPGDPPRPPTCGFLTR) is disordered.

The protein belongs to the herpesviridae tegument protein VP16 protein family. As to quaternary structure, associates with the VP16-induced complex; binding to host HCFC1 activates VP16 for association with the octamer motif-binding host protein POU2F1, to form a multiprotein-DNA complex responsible for activating transcription of the viral immediate early genes.

It localises to the virion tegument. The protein resides in the host nucleus. Transcriptional activator of immediate-early (IE) gene products (alpha genes). Acts as a key activator of lytic infection by initiating the lytic program through the assembly of the transcriptional regulatory VP16-induced complex composed of VP16 and two cellular factors, HCFC1 and POU2F1. VP16-induced complex represents a regulatory switch: when it is on, it promotes IE-gene expression and thus lytic infection, and when it is off, it limits IE-gene transcription favoring latent infection. Its function is as follows. May play a role in the aggregation of tegument proteins around nucleocapsids during virus morphogenesis. The chain is Tegument protein VP16 homolog from Varicella-zoster virus (strain Dumas) (HHV-3).